A 183-amino-acid polypeptide reads, in one-letter code: Small ribosomal subunit protein uS4c (183 aa).

One can recognise an S4 RNA-binding domain in the interval 82-143 (MRLDNILFRL…KQRSKALIQN (62 aa)).

Belongs to the universal ribosomal protein uS4 family. As to quaternary structure, part of the 30S ribosomal subunit. Contacts protein S5. The interaction surface between S4 and S5 is involved in control of translational fidelity.

The protein localises to the plastid. It localises to the chloroplast. In terms of biological role, one of the primary rRNA binding proteins, it binds directly to 16S rRNA where it nucleates assembly of the body of the 30S subunit. With S5 and S12 plays an important role in translational accuracy. This chain is Small ribosomal subunit protein uS4c (rps4), found in Schizorhiza neglecta (Lapeirousia neglecta).